The primary structure comprises 91 residues: Small ribosomal subunit protein uS19 (91 aa).

Belongs to the universal ribosomal protein uS19 family.

Protein S19 forms a complex with S13 that binds strongly to the 16S ribosomal RNA. This Synechococcus sp. (strain CC9902) protein is Small ribosomal subunit protein uS19.